The sequence spans 545 residues: CTP synthase (545 aa).

Residues 1 to 266 are amidoligase domain; sequence MTHFIFVTGG…DDLICERFGF (266 aa). Position 13 (Ser13) interacts with CTP. UTP is bound at residue Ser13. Residues 14–19 and Asp71 each bind ATP; that span reads SLGKGI. The Mg(2+) site is built by Asp71 and Glu140. CTP contacts are provided by residues 147-149, 187-192, and Lys223; these read DIE and KTKPTQ. UTP-binding positions include 187–192 and Lys223; that span reads KTKPTQ. 239–241 is an ATP binding site; that stretch reads KDA. Residues 292-543 form the Glutamine amidotransferase type-1 domain; the sequence is RVAMVGKYVE…IDAAKTQHQK (252 aa). Gly353 serves as a coordination point for L-glutamine. The active-site Nucleophile; for glutamine hydrolysis is Cys380. Residues 381-384, Glu404, and Arg471 contribute to the L-glutamine site; that span reads LGMQ. Active-site residues include His516 and Glu518.

It belongs to the CTP synthase family. Homotetramer.

The enzyme catalyses UTP + L-glutamine + ATP + H2O = CTP + L-glutamate + ADP + phosphate + 2 H(+). It catalyses the reaction L-glutamine + H2O = L-glutamate + NH4(+). The catalysed reaction is UTP + NH4(+) + ATP = CTP + ADP + phosphate + 2 H(+). The protein operates within pyrimidine metabolism; CTP biosynthesis via de novo pathway; CTP from UDP: step 2/2. Its activity is regulated as follows. Allosterically activated by GTP, when glutamine is the substrate; GTP has no effect on the reaction when ammonia is the substrate. The allosteric effector GTP functions by stabilizing the protein conformation that binds the tetrahedral intermediate(s) formed during glutamine hydrolysis. Inhibited by the product CTP, via allosteric rather than competitive inhibition. Functionally, catalyzes the ATP-dependent amination of UTP to CTP with either L-glutamine or ammonia as the source of nitrogen. Regulates intracellular CTP levels through interactions with the four ribonucleotide triphosphates. The sequence is that of CTP synthase from Acinetobacter baumannii (strain ACICU).